A 276-amino-acid chain; its full sequence is Pantothenate synthetase (276 aa).

26–33 (MGYLHEGH) provides a ligand contact to ATP. His-33 serves as the catalytic Proton donor. Gln-57 is a (R)-pantoate binding site. Gln-57 contacts beta-alanine. 142–145 (GLKD) provides a ligand contact to ATP. Residue Gln-148 participates in (R)-pantoate binding. Residues Ile-171 and 179-182 (KSSR) each bind ATP.

This sequence belongs to the pantothenate synthetase family. Homodimer.

The protein resides in the cytoplasm. The enzyme catalyses (R)-pantoate + beta-alanine + ATP = (R)-pantothenate + AMP + diphosphate + H(+). It functions in the pathway cofactor biosynthesis; (R)-pantothenate biosynthesis; (R)-pantothenate from (R)-pantoate and beta-alanine: step 1/1. Its function is as follows. Catalyzes the condensation of pantoate with beta-alanine in an ATP-dependent reaction via a pantoyl-adenylate intermediate. The chain is Pantothenate synthetase from Exiguobacterium sp. (strain ATCC BAA-1283 / AT1b).